Here is a 160-residue protein sequence, read N- to C-terminus: SsrA-binding protein (160 aa).

Residues 135 to 160 are disordered; the sequence is KTHDKRETIKERDWKREQSRILRDRG. The segment covering 138–160 has biased composition (basic and acidic residues); that stretch reads DKRETIKERDWKREQSRILRDRG.

The protein belongs to the SmpB family.

The protein localises to the cytoplasm. Functionally, required for rescue of stalled ribosomes mediated by trans-translation. Binds to transfer-messenger RNA (tmRNA), required for stable association of tmRNA with ribosomes. tmRNA and SmpB together mimic tRNA shape, replacing the anticodon stem-loop with SmpB. tmRNA is encoded by the ssrA gene; the 2 termini fold to resemble tRNA(Ala) and it encodes a 'tag peptide', a short internal open reading frame. During trans-translation Ala-aminoacylated tmRNA acts like a tRNA, entering the A-site of stalled ribosomes, displacing the stalled mRNA. The ribosome then switches to translate the ORF on the tmRNA; the nascent peptide is terminated with the 'tag peptide' encoded by the tmRNA and targeted for degradation. The ribosome is freed to recommence translation, which seems to be the essential function of trans-translation. The protein is SsrA-binding protein of Sphingomonas elodea.